Reading from the N-terminus, the 343-residue chain is Multidrug resistance protein MdtN (343 aa).

The Cytoplasmic segment spans residues 1–12 (MESTPKKAPRSK). The helical; Signal-anchor for type II membrane protein transmembrane segment at 13–33 (FPALLVVALALVALVFVIWRV) threads the bilayer. The Periplasmic portion of the chain corresponds to 34–343 (DSAPSTNDAY…ASAVANLEPQ (310 aa)).

This sequence belongs to the membrane fusion protein (MFP) (TC 8.A.1) family. In terms of assembly, could be part of a tripartite efflux system composed of MdtN, MdtO and MdtP.

The protein resides in the cell inner membrane. Its function is as follows. Could be involved in resistance to puromycin, acriflavine and tetraphenylarsonium chloride. This Escherichia coli (strain K12) protein is Multidrug resistance protein MdtN (mdtN).